The following is a 742-amino-acid chain: Glucosylceramidase (742 aa).

N-linked (GlcNAc...) asparagine glycans are attached at residues asparagine 37 and asparagine 160. Catalysis depends on glutamate 258, which acts as the Proton donor. A glycan (N-linked (GlcNAc...) asparagine) is linked at asparagine 388. Glutamate 492 serves as the catalytic Nucleophile. Asparagine 552, asparagine 560, and asparagine 698 each carry an N-linked (GlcNAc...) asparagine glycan. A helical transmembrane segment spans residues 701-721; that stretch reads IAQILVAVVILLLGVLVAYYA.

The protein belongs to the glycosyl hydrolase 5 (cellulase A) family.

Its subcellular location is the membrane. It catalyses the reaction a beta-D-glucosyl-(1&lt;-&gt;1')-N-acylsphing-4-enine + H2O = an N-acylsphing-4-enine + D-glucose. Specifically hydrolyzes the glucosidic linkage in glucosylceramide. May prevent accumulation of aberrent glucosylceramide containing immature ceramide. This is Glucosylceramidase from Cryptococcus neoformans var. grubii serotype A (strain H99 / ATCC 208821 / CBS 10515 / FGSC 9487) (Filobasidiella neoformans var. grubii).